Here is a 104-residue protein sequence, read N- to C-terminus: Large ribosomal subunit protein uL24 (104 aa).

This sequence belongs to the universal ribosomal protein uL24 family. Part of the 50S ribosomal subunit.

One of two assembly initiator proteins, it binds directly to the 5'-end of the 23S rRNA, where it nucleates assembly of the 50S subunit. Its function is as follows. One of the proteins that surrounds the polypeptide exit tunnel on the outside of the subunit. The polypeptide is Large ribosomal subunit protein uL24 (Shewanella denitrificans (strain OS217 / ATCC BAA-1090 / DSM 15013)).